The chain runs to 381 residues: MYG1 exonuclease (381 aa).

A mitochondrion-targeting transit peptide spans 1–47; that stretch reads MGRGFLRGVLTLLPLRSVLQVQHCMLVSEPDLPPKRPRNNLMAPPRI. 2 positions are modified to N6-acetyllysine: K267 and K273.

It belongs to the MYG1 family.

The protein resides in the nucleus. It localises to the nucleoplasm. The protein localises to the mitochondrion matrix. Its subcellular location is the nucleolus. In terms of biological role, 3'-5' RNA exonuclease which cleaves in situ on specific transcripts in both nucleus and mitochondrion. Involved in regulating spatially segregated organellar RNA processing, acts as a coordinator of nucleo-mitochondrial crosstalk. In nucleolus, processes pre-ribosomal RNA involved in ribosome assembly and alters cytoplasmic translation. In mitochondrial matrix, processes 3'-termini of the mito-ribosomal and messenger RNAs and controls translation of mitochondrial proteins. The protein is MYG1 exonuclease of Rattus norvegicus (Rat).